We begin with the raw amino-acid sequence, 444 residues long: Bifunctional enolase 2/transcriptional activator (444 aa).

Substrate contacts are provided by H163 and E172. E215 serves as the catalytic Proton donor. Positions 250, 300, and 327 each coordinate Mg(2+). Substrate-binding residues include E300 and D327. K352 functions as the Proton acceptor in the catalytic mechanism. Residues 379–382 (SHRS) and K403 contribute to the substrate site.

Belongs to the enolase family. In terms of assembly, homodimer. Requires Mg(2+) as cofactor.

Its subcellular location is the cytoplasm. The protein localises to the cytosol. It is found in the nucleus. The protein resides in the mitochondrion outer membrane. It carries out the reaction (2R)-2-phosphoglycerate = phosphoenolpyruvate + H2O. It functions in the pathway carbohydrate degradation; glycolysis; pyruvate from D-glyceraldehyde 3-phosphate: step 4/5. In terms of biological role, multifunctional enzyme that acts as an enolase involved in the metabolism and as a positive regulator of cold-responsive gene transcription. Binds to the cis-element the gene promoter of STZ/ZAT10, a zinc finger transcriptional repressor. This Arabidopsis thaliana (Mouse-ear cress) protein is Bifunctional enolase 2/transcriptional activator (ENO2).